A 101-amino-acid polypeptide reads, in one-letter code: MVCEKCEKKLGTVITPDTWKDGARNTTESGGRKLNENKALTSKKARFDPYGKNKFSTCRICKSSVHQPGSHYCQGCAYKKGICAMCGKKVLDTKNYKQTSV.

The tract at residues 95 to 101 (NYKQTSV) is sufficient for interaction with DLG4. Residues 98–101 (QTSV) form a PDZ3-binding region.

The protein belongs to the CRIPT family. As to quaternary structure, component of the minor spliceosome. Within this complex, interacts with RNF113A, as well as with SF3B1/SF3b155, SF3B2/SF3b145 and PHF5A/SF3b14b. Interacts with TUBB1. Interacts strongly with the PDZ3 domain of members of the DLG4 family. Associates with microtubules. Interacts with DLG4.

Its subcellular location is the cytoplasm. It is found in the synapse. It localises to the cell projection. The protein localises to the dendritic spine. In terms of biological role, as a component of the minor spliceosome, involved in the splicing of U12-type introns in pre-mRNAs. Involved in the cytoskeletal anchoring of DLG4 in excitatory synapses. This Bos taurus (Bovine) protein is Cysteine-rich PDZ-binding protein (CRIPT).